A 971-amino-acid polypeptide reads, in one-letter code: Exportin-2 (971 aa).

The 74-residue stretch at 29-102 (AEKFLESVEG…KANIVNLMLS (74 aa)) folds into the Importin N-terminal domain.

It belongs to the XPO2/CSE1 family. In terms of assembly, interacts with cftr.

It is found in the cytoplasm. The protein resides in the nucleus. Functionally, export receptor for importin alpha. Mediates importin-alpha re-export from the nucleus to the cytoplasm after import substrates have been released into the nucleoplasm. Negatively regulates fluid secretion and plays a role in fluid homeostasis by down-regulating cftr activity. This chain is Exportin-2 (cse1l), found in Pagrus major (Red sea bream).